The primary structure comprises 375 residues: Ribosomal RNA large subunit methyltransferase G (375 aa).

Belongs to the methyltransferase superfamily. RlmG family.

The protein localises to the cytoplasm. The enzyme catalyses guanosine(1835) in 23S rRNA + S-adenosyl-L-methionine = N(2)-methylguanosine(1835) in 23S rRNA + S-adenosyl-L-homocysteine + H(+). Specifically methylates the guanine in position 1835 (m2G1835) of 23S rRNA. The protein is Ribosomal RNA large subunit methyltransferase G of Erwinia tasmaniensis (strain DSM 17950 / CFBP 7177 / CIP 109463 / NCPPB 4357 / Et1/99).